The sequence spans 430 residues: Adenylosuccinate synthetase (430 aa).

Residues 12 to 18 (GDEGKGK) and 40 to 42 (GHT) each bind GTP. Asp13 functions as the Proton acceptor in the catalytic mechanism. Mg(2+) is bound by residues Asp13 and Gly40. Residues 13–16 (DEGK), 38–41 (NAGH), Thr130, Arg144, Gln224, Thr239, and Arg303 each bind IMP. His41 functions as the Proton donor in the catalytic mechanism. 299–305 (VVTGRPR) contributes to the substrate binding site. GTP-binding positions include Arg305, 331–333 (KLD), and 413–415 (STS).

The protein belongs to the adenylosuccinate synthetase family. In terms of assembly, homodimer. The cofactor is Mg(2+).

It localises to the cytoplasm. It carries out the reaction IMP + L-aspartate + GTP = N(6)-(1,2-dicarboxyethyl)-AMP + GDP + phosphate + 2 H(+). The protein operates within purine metabolism; AMP biosynthesis via de novo pathway; AMP from IMP: step 1/2. Its function is as follows. Plays an important role in the de novo pathway of purine nucleotide biosynthesis. Catalyzes the first committed step in the biosynthesis of AMP from IMP. In Azorhizobium caulinodans (strain ATCC 43989 / DSM 5975 / JCM 20966 / LMG 6465 / NBRC 14845 / NCIMB 13405 / ORS 571), this protein is Adenylosuccinate synthetase.